We begin with the raw amino-acid sequence, 547 residues long: TBCC domain-containing protein 1 (547 aa).

The region spanning proline 304–leucine 435 is the C-CAP/cofactor C-like domain.

This sequence belongs to the TBCC family.

Its subcellular location is the cytoplasm. It localises to the cytoskeleton. The protein localises to the microtubule organizing center. The protein resides in the centrosome. It is found in the spindle pole. May play a role in the regulation of centrosome and Golgi apparatus positioning. The sequence is that of TBCC domain-containing protein 1 (tbccd1) from Xenopus laevis (African clawed frog).